We begin with the raw amino-acid sequence, 612 residues long: T-cell immunomodulatory protein (612 aa).

The first 33 residues, 1–33 (MAAAGRLPSSWALFSPLLAGLALLGVGPVPARA), serve as a signal peptide directing secretion. N-linked (GlcNAc...) asparagine glycosylation is found at N36, N95, N139, N146, N151, N176, N188, N226, and N243. Residues 258–293 (VVGQSAFADFDGDGHMDHLLPGCEDKNCQKSTIYLV) form an FG-GAP; atypical repeat. N-linked (GlcNAc...) asparagine glycosylation is found at N353, N371, and N482. A helical membrane pass occupies residues 567–587 (VLLTAIALIGVCVFILAIIGI).

This sequence belongs to the TIP family. In terms of assembly, interacts with RUVBL1, RUVBL2 and alpha-tubulin. As to expression, ubiquitously expressed.

The protein resides in the secreted. It localises to the membrane. Its function is as follows. Modulator of T-cell function. Has a protective effect in graft versus host disease model. The sequence is that of T-cell immunomodulatory protein from Homo sapiens (Human).